The following is a 63-amino-acid chain: UPF0337 protein PSPTO_1596 (63 aa).

Positions 20-63 are disordered; it reads KQAVGKATDNTKLQAEGKAQELKGEGQQAKGEVKDAVKKGVDKV. A compositionally biased stretch (basic and acidic residues) spans 50-63; that stretch reads GEVKDAVKKGVDKV.

The protein belongs to the UPF0337 (CsbD) family.

The polypeptide is UPF0337 protein PSPTO_1596 (Pseudomonas syringae pv. tomato (strain ATCC BAA-871 / DC3000)).